We begin with the raw amino-acid sequence, 380 residues long: MVWTSRICFRKYGNFVDNVRLYVRGGTGGMGLPRLGGHGGDGGDVWVVAKKDTRLKQIKDKHPDKRFIAGVGSNSSIQALRGAKGEDVEVFAPTGISVTSDHGRMLGELNREGDKLLVAKGGRGGSPQSGFLPNKGQTRNIRLDLKLIADFGLVGFPNAGKSSLLTALSHAKPKIANYPFTTIKPEIGKVMYDDHKQVSVADLPGLIEGAHVNKGMGHKFLKHVERTKQLMFVVDVCGFQLASKTPFRSAFETVLLLSKELELYKEELLSKPAILVINKMDLPEAQSHFQELEAQLENQGESIHLFSEDVIPKSLMHFTHIVPVSAMTGHGLPLLKSLIRQSLEEQDTIDTEAQRSQKILELRREIPSSSIPSWGLPQPT.

Residues 13 to 148 (GNFVDNVRLY…RNIRLDLKLI (136 aa)) form the Obg domain. The OBG-type G domain maps to 149–344 (ADFGLVGFPN…LKSLIRQSLE (196 aa)). GTP is bound by residues 155–162 (GFPNAGKS), 202–206 (DLPGL), and 278–281 (NKMD).

It belongs to the TRAFAC class OBG-HflX-like GTPase superfamily. OBG GTPase family.

It localises to the nucleus. It is found in the nucleolus. May be involved in the ribosome maturation process. The chain is GTP-binding protein 10 (gtpbp10) from Danio rerio (Zebrafish).